A 441-amino-acid chain; its full sequence is Ribosomal protein uS12 methylthiotransferase RimO (441 aa).

Positions 7-117 constitute an MTTase N-terminal domain; that stretch reads PKVSFVSLGC…VLDAVHRALP (111 aa). Positions 16, 52, 81, 148, 152, and 155 each coordinate [4Fe-4S] cluster. Positions 134 to 371 constitute a Radical SAM core domain; it reads LTPRHYAYLK…MARQQKISAR (238 aa). The 67-residue stretch at 374–440 folds into the TRAM domain; that stretch reads KRKVGTRQQV…AYDLHGSVAG (67 aa).

This sequence belongs to the methylthiotransferase family. RimO subfamily. It depends on [4Fe-4S] cluster as a cofactor.

The protein localises to the cytoplasm. It carries out the reaction L-aspartate(89)-[ribosomal protein uS12]-hydrogen + (sulfur carrier)-SH + AH2 + 2 S-adenosyl-L-methionine = 3-methylsulfanyl-L-aspartate(89)-[ribosomal protein uS12]-hydrogen + (sulfur carrier)-H + 5'-deoxyadenosine + L-methionine + A + S-adenosyl-L-homocysteine + 2 H(+). Its function is as follows. Catalyzes the methylthiolation of an aspartic acid residue of ribosomal protein uS12. The sequence is that of Ribosomal protein uS12 methylthiotransferase RimO from Rhodopseudomonas palustris (strain BisB18).